The following is a 150-amino-acid chain: Snaclec 7 (150 aa).

A signal peptide spans methionine 1–alanine 23. Cystine bridges form between cysteine 27–cysteine 38, cysteine 55–cysteine 144, and cysteine 121–cysteine 136. Residues tyrosine 34–lysine 145 form the C-type lectin domain.

Belongs to the snaclec family. As to quaternary structure, heterodimer; disulfide-linked.

It localises to the secreted. Interferes with one step of hemostasis (modulation of platelet aggregation, or coagulation cascade, for example). This is Snaclec 7 from Daboia siamensis (Eastern Russel's viper).